The following is a 290-amino-acid chain: Pyridoxal kinase PdxY (290 aa).

Residues Ser12 and 47–48 contribute to the substrate site; that span reads TQ. Residues Asp114, Glu151, Lys184, and 211 to 214 each bind ATP; that span reads RPLL. Position 225 (Asp225) interacts with substrate.

The protein belongs to the pyridoxine kinase family. PdxY subfamily. As to quaternary structure, homodimer. The cofactor is Mg(2+).

The catalysed reaction is pyridoxal + ATP = pyridoxal 5'-phosphate + ADP + H(+). It functions in the pathway cofactor metabolism; pyridoxal 5'-phosphate salvage; pyridoxal 5'-phosphate from pyridoxal: step 1/1. Pyridoxal kinase involved in the salvage pathway of pyridoxal 5'-phosphate (PLP). Catalyzes the phosphorylation of pyridoxal to PLP. The sequence is that of Pyridoxal kinase PdxY from Pseudomonas putida (strain W619).